We begin with the raw amino-acid sequence, 133 residues long: Putative pre-16S rRNA nuclease (133 aa).

This sequence belongs to the YqgF nuclease family.

The protein localises to the cytoplasm. Its function is as follows. Could be a nuclease involved in processing of the 5'-end of pre-16S rRNA. The sequence is that of Putative pre-16S rRNA nuclease from Bordetella bronchiseptica (strain ATCC BAA-588 / NCTC 13252 / RB50) (Alcaligenes bronchisepticus).